Consider the following 608-residue polypeptide: Nuclear protein localization protein 4 homolog (608 aa).

N-acetylalanine is present on A2. At K179 the chain carries N6-acetyllysine. In terms of domain architecture, MPN spans 226-363 (IMFENHTVAD…MCRLSPDGHF (138 aa)). A RanBP2-type zinc finger spans residues 580–608 (TAAMWACQHCTFMNQPGTGHCEMCSLPRT).

Belongs to the NPL4 family. Heterodimer with UFD1. The heterodimer binds ubiquitinated proteins. The heterodimer binds to VCP and inhibits Golgi membrane fusion. Interacts with ZFAND2B; probably through VCP. In terms of tissue distribution, expressed at highest levels in brain, heart, skeletal muscle, kidney and fetal liver.

Its subcellular location is the cytoplasm. It localises to the cytosol. The protein localises to the endoplasmic reticulum. It is found in the nucleus. It participates in protein degradation; proteasomal ubiquitin-dependent pathway. Its function is as follows. The ternary complex containing UFD1, VCP and NPLOC4 binds ubiquitinated proteins and is necessary for the export of misfolded proteins from the ER to the cytoplasm, where they are degraded by the proteasome. The NPLOC4-UFD1-VCP complex regulates spindle disassembly at the end of mitosis and is necessary for the formation of a closed nuclear envelope. Acts as a negative regulator of type I interferon production via the complex formed with VCP and UFD1, which binds to RIGI and recruits RNF125 to promote ubiquitination and degradation of RIGI. This is Nuclear protein localization protein 4 homolog (NPLOC4) from Homo sapiens (Human).